We begin with the raw amino-acid sequence, 76 residues long: Kappa-actitoxin-Avd4a (76 aa).

A signal peptide spans 1 to 19 (MNKALFLCLVVLCAAVVFA). A propeptide spanning residues 20-31 (AEDLQKAKHAPF) is cleaved from the precursor. Cystine bridges form between C37-C72, C39-C65, and C55-C73.

The protein belongs to the sea anemone type 3 (BDS) potassium channel toxin family. Highly expressed in the ectodermal tissue from the distal and proximal tentacles, body wall, and oral disk.

Its subcellular location is the secreted. The protein resides in the nematocyst. Functionally, acts as a gating modifier on both Kv and Nav ion channels, and also acts on blood pressure. Voltage-dependently inhibits voltage-gated potassium channels Kv3 (Kv3.1/KCNC1, Kv3.2/KCNC2 and Kv3.4/KCNC4) and slows inactivation of the voltage-gated sodium channel Nav1.7/SCN9A. Inhibits all Kv3.1, Kv3.2 and Kv3.4 by about 50% when tested at a voltage of +40 mV (45%, 48% and 56%, respectively). May act by binding residues in voltage-sensing domains S3b and S4 of Kv3. On sodium channels, tests have been done on human Nav1.7/SCN9A (expressed in HEK293 cells) (EC(50)=3 nM) and rat SCG neurons that mostly carry Nav1.7 channels (EC(50)=300 nM). This toxin also reduces blood pressure. This is Kappa-actitoxin-Avd4a from Anemonia viridis (Snakelocks anemone).